A 386-amino-acid chain; its full sequence is Protein phosphatase methylesterase 1 (386 aa).

Residues 1–38 (MSALEKSMHLGRLPSRPPLPGSGGSQSGAKMRMGPGRK) form a disordered region. Phosphoserine is present on Ser-15. An Asymmetric dimethylarginine; alternate modification is found at Arg-16. Arg-16 is subject to Omega-N-methylarginine; alternate. Ser-42 is modified (phosphoserine). Ser-156 is a catalytic residue. The span at 254 to 265 (IIEEEEEDEEGS) shows a compositional bias: acidic residues. The segment at 254–280 (IIEEEEEDEEGSESISKRKKEDDMETK) is disordered. Basic and acidic residues predominate over residues 268 to 280 (ISKRKKEDDMETK). His-349 is a catalytic residue.

The protein belongs to the AB hydrolase superfamily. As to quaternary structure, binds PPP2CA and PPP2CB. Phosphorylated by SIK1 following increases in intracellular sodium, leading to dissociation from the protein phosphatase 2A (PP2A) complex and subsequent dephosphorylation of sodium/potassium-transporting ATPase ATP1A1.

The catalysed reaction is [phosphatase 2A protein]-C-terminal L-leucine methyl ester + H2O = [phosphatase 2A protein]-C-terminal L-leucine + methanol + H(+). Its function is as follows. Demethylates proteins that have been reversibly carboxymethylated. Demethylates PPP2CB (in vitro) and PPP2CA. Binding to PPP2CA displaces the manganese ion and inactivates the enzyme. This chain is Protein phosphatase methylesterase 1 (PPME1), found in Pongo abelii (Sumatran orangutan).